Here is a 294-residue protein sequence, read N- to C-terminus: Nucleotide-binding protein CPF_0343 (294 aa).

8–15 (GLSGAGKT) is a binding site for ATP. Position 59 to 62 (59 to 62 (DIRG)) interacts with GTP.

The protein belongs to the RapZ-like family.

In terms of biological role, displays ATPase and GTPase activities. This Clostridium perfringens (strain ATCC 13124 / DSM 756 / JCM 1290 / NCIMB 6125 / NCTC 8237 / Type A) protein is Nucleotide-binding protein CPF_0343.